The sequence spans 124 residues: Putative B3 domain-containing protein At1g51970 (124 aa).

Residues 18 to 124 constitute a DNA-binding region (TF-B3); that stretch reads VLKKNLTESD…SRRFLFHHIN (107 aa).

The protein localises to the nucleus. The polypeptide is Putative B3 domain-containing protein At1g51970 (Arabidopsis thaliana (Mouse-ear cress)).